Reading from the N-terminus, the 1013-residue chain is Probable outer membrane protein PmpG (1013 aa).

An N-terminal signal peptide occupies residues 1-27; the sequence is MQTSFHKFFLSMILAYSCCSLSGGGYA. An Autotransporter domain is found at 733–1013; the sequence is GRSYCRGLWV…GLSAGSKVRF (281 aa).

This sequence belongs to the PMP outer membrane protein family.

The protein localises to the secreted. Its subcellular location is the cell wall. The protein resides in the cell outer membrane. The polypeptide is Probable outer membrane protein PmpG (pmpG) (Chlamydia trachomatis serovar D (strain ATCC VR-885 / DSM 19411 / UW-3/Cx)).